Here is a 180-residue protein sequence, read N- to C-terminus: LDLR chaperone boca (180 aa).

The first 18 residues, 1–18 (MQTRLVLLLLALTPLVLA), serve as a signal peptide directing secretion. Acidic residues predominate over residues 48–61 (QWEEDEEPLEDDEL). The segment at 48–78 (QWEEDEEPLEDDELPEHLRPQPKLDLSNLDS) is disordered. The interval 93 to 166 (TLMTFVSVTG…QERCKGVTIE (74 aa)) is structured core. A Prevents secretion from ER motif is present at residues 177 to 180 (KDEL).

Belongs to the MESD family. As to quaternary structure, monomer. Interacts with Arrow and Yolkless.

The protein localises to the endoplasmic reticulum. Chaperone specifically assisting the folding of beta-propeller/EGF modules within the family of low-density lipoprotein receptors (LDLRs). Acts as a modulator of the Wg pathway, since some LDLRs are coreceptors for the canonical Wnt pathway. This Drosophila melanogaster (Fruit fly) protein is LDLR chaperone boca (boca).